We begin with the raw amino-acid sequence, 169 residues long: Unfolded protein response-inducible protein 1 (169 aa).

Functionally, involved in the unfolded protein response (UPR), a transcriptional response which up-regulates genes that enable cells to cope with misfolded, endoplasmic reticulum-retained proteins. UPR is part of the endoplasmic reticulum quality control (ERQC) which prevents the exit of misfolded secretory and membrane proteins from the endoplasmic reticulum. This is Unfolded protein response-inducible protein 1 (ULI1) from Saccharomyces cerevisiae (strain ATCC 204508 / S288c) (Baker's yeast).